Consider the following 468-residue polypeptide: ERO1-like protein alpha (468 aa).

Residues 1–23 (MGRGWGFLFGLLGAVWLLSSGHG) form the signal peptide. 8 disulfide bridges follow: cysteine 35/cysteine 48, cysteine 37/cysteine 46, cysteine 85/cysteine 391, cysteine 94/cysteine 99, cysteine 94/cysteine 131, cysteine 99/cysteine 104, cysteine 208/cysteine 241, and cysteine 394/cysteine 397. Residues serine 106 and serine 143 each carry the phosphoserine modification. Serine 145 carries the phosphoserine; by FAM20C modification. Arginine 187, threonine 189, and tryptophan 200 together coordinate FAD. The FAD site is built by serine 252 and histidine 255. The N-linked (GlcNAc...) asparagine glycan is linked to asparagine 280. Positions 287 and 300 each coordinate FAD. An N-linked (GlcNAc...) asparagine glycan is attached at asparagine 384.

The protein belongs to the EROs family. Predominantly monomer. May function both as a monomer and a homodimer. Interacts with PDILT. Interacts with ERP44; the interaction results in retention of ERO1A in the endoplasmic reticulum. It depends on FAD as a cofactor. In terms of processing, N-glycosylated. The Cys-94/Cys-99 and Cys-394/Cys-397 disulfide bonds constitute the redox-active center. The Cys-94/Cys-99 disulfide bond may accept electron from P4HB and funnel them to the active site disulfide Cys-394/Cys-397. The regulatory Cys-99/Cys-104 disulfide bond stabilizes the other regulatory bond Cys-94/Cys-131. Post-translationally, phosphorylated on Ser-145 by FAM20C in the Golgi which increases its enzymatic activity. Phosphorylation is induced by lactation. It is also induced by hypoxia and reductive stress. Widely expressed at low level. Expressed at high level in upper digestive tract. Highly expressed in esophagus. Weakly expressed in stomach and duodenum.

The protein resides in the endoplasmic reticulum membrane. It is found in the golgi apparatus lumen. Its subcellular location is the secreted. It localises to the cell projection. The protein localises to the dendrite. Its activity is regulated as follows. Enzyme activity is tightly regulated to prevent the accumulation of reactive oxygen species in the endoplasmic reticulum. Reversibly down-regulated by the formation of disulfide bonds between the active site Cys-94 and Cys-131, and between Cys-99 and Cys-104. Glutathione may be required to regulate its activity in the endoplasmic reticulum. Functionally, oxidoreductase involved in disulfide bond formation in the endoplasmic reticulum. Efficiently reoxidizes P4HB/PDI, the enzyme catalyzing protein disulfide formation, in order to allow P4HB to sustain additional rounds of disulfide formation. Following P4HB reoxidation, passes its electrons to molecular oxygen via FAD, leading to the production of reactive oxygen species (ROS) in the cell. Required for the proper folding of immunoglobulins. Plays an important role in ER stress-induced, CHOP-dependent apoptosis by activating the inositol 1,4,5-trisphosphate receptor IP3R1. Involved in the release of the unfolded cholera toxin from reduced P4HB/PDI in case of infection by V.cholerae, thereby playing a role in retrotranslocation of the toxin. In Homo sapiens (Human), this protein is ERO1-like protein alpha.